An 83-amino-acid polypeptide reads, in one-letter code: UPF0512 protein I (83 aa).

Belongs to the UPF0512 family.

This chain is UPF0512 protein I, found in Dictyostelium discoideum (Social amoeba).